The following is a 335-amino-acid chain: Zinc finger protein CO3 (335 aa).

Residues cysteine 15, cysteine 18, cysteine 38, and histidine 43 each coordinate Zn(2+). The B box-type; atypical zinc-finger motif lies at cysteine 15–methionine 57. The segment at alanine 141–glycine 179 is disordered. The CCT domain occupies arginine 268 to arginine 310.

Belongs to the CONSTANS family.

The protein resides in the nucleus. Functionally, probable transcription factor involved in the regulation of flowering time under short day (SD) conditions. Functions as a repressor of flowering under SD conditions, independently of HD1, EHD1, MADS50 and MADS51. Controls flowering time under SD conditions by negatively regulating the expression of HD3A and FTL. The polypeptide is Zinc finger protein CO3 (Oryza sativa subsp. japonica (Rice)).